The primary structure comprises 475 residues: F-box protein SKIP22 (475 aa).

Positions 114–133 (DQAKSNPNTSVEDPEGDISG) are disordered. An F-box domain is found at 319 to 365 (PPCLMRLPTELKLKILELLPGVSIGNMACVCTEMRYLASDNDLWKQK).

Part of a SCF (ASK-cullin-F-box) protein ligase complex. Interacts with SKP1A/ASK1 and SPK1B/ASK2.

The protein resides in the nucleus. It participates in protein modification; protein ubiquitination. Component of SCF(ASK-cullin-F-box) E3 ubiquitin ligase complexes, which may mediate the ubiquitination and subsequent proteasomal degradation of target proteins. The protein is F-box protein SKIP22 (SKIP22) of Arabidopsis thaliana (Mouse-ear cress).